The following is a 119-amino-acid chain: MHELSITEELLKTIVAKAEEAKARKISRINLVIGEYAGVVEDSVKMCFDILSQDTMAKGALLEFKRIPAEFRCRLCGHTFPSGQHALVCPKCQGWNAEVIAGNEFFIESIEVDDESQSS.

Histidine 2 serves as a coordination point for Ni(2+). Zn(2+) is bound by residues cysteine 73, cysteine 76, cysteine 89, and cysteine 92.

It belongs to the HypA/HybF family.

In terms of biological role, involved in the maturation of [NiFe] hydrogenases. Required for nickel insertion into the metal center of the hydrogenase. The sequence is that of Hydrogenase maturation factor HypA from Dehalococcoides mccartyi (strain ATCC BAA-2266 / KCTC 15142 / 195) (Dehalococcoides ethenogenes (strain 195)).